A 449-amino-acid polypeptide reads, in one-letter code: UDP-glycosyltransferase 74F2 (449 aa).

UDP-alpha-D-glucose contacts are provided by residues Ser273, 325–327 (SPQ), 342–350 (HCGWNSTME), and 364–367 (WTDQ).

It belongs to the UDP-glycosyltransferase family. In terms of tissue distribution, expressed in seedlings.

Its function is as follows. Glycosyltransferase that glucosylates benzoic acid and derivatives. Substrate preference is benzoic acid &gt; salicylic acid (SA) &gt; 3-hydroxybenzoic acid &gt; 4-hydroxybenzoic acid. Catalyzes the formation of both SA 2-O-beta-D-glucoside (SAG) and SA glucose ester (SGE). Has high affinity for the tryptophan precursor anthranilate. Catalyzes the formation of anthranilate glucose ester. Is the major source of this activity in the plant. The polypeptide is UDP-glycosyltransferase 74F2 (UGT74F2) (Arabidopsis thaliana (Mouse-ear cress)).